A 199-amino-acid polypeptide reads, in one-letter code: Protein GrpE (199 aa).

Basic and acidic residues predominate over residues 1 to 24 (MSKQNKKDWKKFKDEHKEEHKVEN). The interval 1–52 (MSKQNKKDWKKFKDEHKEEHKVENEILEEETDEESQHQEPALGHPSYTALEE) is disordered.

This sequence belongs to the GrpE family. Homodimer.

The protein resides in the cytoplasm. Its function is as follows. Participates actively in the response to hyperosmotic and heat shock by preventing the aggregation of stress-denatured proteins, in association with DnaK and GrpE. It is the nucleotide exchange factor for DnaK and may function as a thermosensor. Unfolded proteins bind initially to DnaJ; upon interaction with the DnaJ-bound protein, DnaK hydrolyzes its bound ATP, resulting in the formation of a stable complex. GrpE releases ADP from DnaK; ATP binding to DnaK triggers the release of the substrate protein, thus completing the reaction cycle. Several rounds of ATP-dependent interactions between DnaJ, DnaK and GrpE are required for fully efficient folding. The sequence is that of Protein GrpE from Legionella pneumophila.